Reading from the N-terminus, the 248-residue chain is Pulmonary surfactant-associated protein A2 (248 aa).

The signal sequence occupies residues 1 to 20 (MWLCPLALTLILMAASGAAC). The Collagen-like domain maps to 28 to 100 (GSPGIPGTPG…AGERGPPGLP (73 aa)). 4-hydroxyproline occurs at positions 30, 33, 36, 42, 54, 57, 63, 67, and 70. The segment at 33-101 (PGTPGSHGLP…GERGPPGLPA (69 aa)) is disordered. The segment covering 42–51 (PGRDGRDGVK) has biased composition (basic and acidic residues). Pro residues predominate over residues 54-70 (PGPPGPMGPPGETPCPP). Low complexity predominate over residues 71–82 (GNNGLPGAPGVP). Basic and acidic residues predominate over residues 84 to 93 (ERGEKGEAGE). Residues 132–248 (MTVGEKVFSS…LYSRLTICEF (117 aa)) enclose the C-type lectin domain. 2 cysteine pairs are disulfide-bonded: Cys155–Cys246 and Cys224–Cys238. Asn207 carries an N-linked (GlcNAc...) asparagine glycan.

This sequence belongs to the SFTPA family. As to quaternary structure, oligomeric complex of 6 set of homotrimers. Post-translationally, N-acetylated.

It localises to the secreted. The protein localises to the extracellular space. The protein resides in the extracellular matrix. Its subcellular location is the surface film. Functionally, in presence of calcium ions, it binds to surfactant phospholipids and contributes to lower the surface tension at the air-liquid interface in the alveoli of the mammalian lung and is essential for normal respiration. This chain is Pulmonary surfactant-associated protein A2 (SFTPA2), found in Homo sapiens (Human).